Consider the following 270-residue polypeptide: Putative phosphoenolpyruvate synthase regulatory protein (270 aa).

An ADP-binding site is contributed by 150-157 (GVSRCGKT).

Belongs to the pyruvate, phosphate/water dikinase regulatory protein family. PSRP subfamily.

The catalysed reaction is [pyruvate, water dikinase] + ADP = [pyruvate, water dikinase]-phosphate + AMP + H(+). It catalyses the reaction [pyruvate, water dikinase]-phosphate + phosphate + H(+) = [pyruvate, water dikinase] + diphosphate. In terms of biological role, bifunctional serine/threonine kinase and phosphorylase involved in the regulation of the phosphoenolpyruvate synthase (PEPS) by catalyzing its phosphorylation/dephosphorylation. This chain is Putative phosphoenolpyruvate synthase regulatory protein, found in Shewanella piezotolerans (strain WP3 / JCM 13877).